Consider the following 283-residue polypeptide: Pantothenate synthetase (283 aa).

30-37 provides a ligand contact to ATP; that stretch reads MGNLHDGH. His37 serves as the catalytic Proton donor. Gln61 contributes to the (R)-pantoate binding site. Gln61 contacts beta-alanine. 149-152 provides a ligand contact to ATP; sequence GEKD. Residue Gln155 coordinates (R)-pantoate. Residue 186-189 participates in ATP binding; it reads LSSR.

The protein belongs to the pantothenate synthetase family. Homodimer.

Its subcellular location is the cytoplasm. It catalyses the reaction (R)-pantoate + beta-alanine + ATP = (R)-pantothenate + AMP + diphosphate + H(+). It participates in cofactor biosynthesis; (R)-pantothenate biosynthesis; (R)-pantothenate from (R)-pantoate and beta-alanine: step 1/1. Functionally, catalyzes the condensation of pantoate with beta-alanine in an ATP-dependent reaction via a pantoyl-adenylate intermediate. This chain is Pantothenate synthetase, found in Escherichia fergusonii (strain ATCC 35469 / DSM 13698 / CCUG 18766 / IAM 14443 / JCM 21226 / LMG 7866 / NBRC 102419 / NCTC 12128 / CDC 0568-73).